The primary structure comprises 327 residues: Glycerol-3-phosphate dehydrogenase [NAD(P)+] (327 aa).

Residues W13, H33, and K102 each contribute to the NADPH site. 3 residues coordinate sn-glycerol 3-phosphate: K102, G130, and S132. A134 lines the NADPH pocket. Residues K185, D238, S248, R249, and N250 each coordinate sn-glycerol 3-phosphate. K185 serves as the catalytic Proton acceptor. Residue R249 coordinates NADPH. E275 provides a ligand contact to NADPH.

This sequence belongs to the NAD-dependent glycerol-3-phosphate dehydrogenase family.

The protein resides in the cytoplasm. It catalyses the reaction sn-glycerol 3-phosphate + NAD(+) = dihydroxyacetone phosphate + NADH + H(+). It carries out the reaction sn-glycerol 3-phosphate + NADP(+) = dihydroxyacetone phosphate + NADPH + H(+). Its pathway is membrane lipid metabolism; glycerophospholipid metabolism. In terms of biological role, catalyzes the reduction of the glycolytic intermediate dihydroxyacetone phosphate (DHAP) to sn-glycerol 3-phosphate (G3P), the key precursor for phospholipid synthesis. This is Glycerol-3-phosphate dehydrogenase [NAD(P)+] from Vesicomyosocius okutanii subsp. Calyptogena okutanii (strain HA).